We begin with the raw amino-acid sequence, 629 residues long: 1-deoxy-D-xylulose-5-phosphate synthase (629 aa).

Residues His-73 and 114 to 116 (GHA) contribute to the thiamine diphosphate site. Mg(2+) is bound at residue Asp-145. Residues 146-147 (GA), Asn-174, Tyr-284, and Glu-360 each bind thiamine diphosphate. Mg(2+) is bound at residue Asn-174.

Belongs to the transketolase family. DXPS subfamily. As to quaternary structure, homodimer. Mg(2+) is required as a cofactor. Thiamine diphosphate serves as cofactor.

The enzyme catalyses D-glyceraldehyde 3-phosphate + pyruvate + H(+) = 1-deoxy-D-xylulose 5-phosphate + CO2. It functions in the pathway metabolic intermediate biosynthesis; 1-deoxy-D-xylulose 5-phosphate biosynthesis; 1-deoxy-D-xylulose 5-phosphate from D-glyceraldehyde 3-phosphate and pyruvate: step 1/1. Catalyzes the acyloin condensation reaction between C atoms 2 and 3 of pyruvate and glyceraldehyde 3-phosphate to yield 1-deoxy-D-xylulose-5-phosphate (DXP). The protein is 1-deoxy-D-xylulose-5-phosphate synthase of Thermomicrobium roseum (strain ATCC 27502 / DSM 5159 / P-2).